The sequence spans 556 residues: 2-succinyl-5-enolpyruvyl-6-hydroxy-3-cyclohexene-1-carboxylate synthase (556 aa).

This sequence belongs to the TPP enzyme family. MenD subfamily. In terms of assembly, homodimer. It depends on Mg(2+) as a cofactor. Mn(2+) is required as a cofactor. The cofactor is thiamine diphosphate.

It catalyses the reaction isochorismate + 2-oxoglutarate + H(+) = 5-enolpyruvoyl-6-hydroxy-2-succinyl-cyclohex-3-ene-1-carboxylate + CO2. It participates in quinol/quinone metabolism; 1,4-dihydroxy-2-naphthoate biosynthesis; 1,4-dihydroxy-2-naphthoate from chorismate: step 2/7. Its pathway is quinol/quinone metabolism; menaquinone biosynthesis. Functionally, catalyzes the thiamine diphosphate-dependent decarboxylation of 2-oxoglutarate and the subsequent addition of the resulting succinic semialdehyde-thiamine pyrophosphate anion to isochorismate to yield 2-succinyl-5-enolpyruvyl-6-hydroxy-3-cyclohexene-1-carboxylate (SEPHCHC). The sequence is that of 2-succinyl-5-enolpyruvyl-6-hydroxy-3-cyclohexene-1-carboxylate synthase from Salmonella heidelberg (strain SL476).